The sequence spans 187 residues: ATP synthase subunit b (187 aa).

A helical membrane pass occupies residues 36-53 (PYQWVSVAMLVLIAIMLW).

The protein belongs to the ATPase B chain family. In terms of assembly, F-type ATPases have 2 components, F(1) - the catalytic core - and F(0) - the membrane proton channel. F(1) has five subunits: alpha(3), beta(3), gamma(1), delta(1), epsilon(1). F(0) has four main subunits: a(1), b(2) and c(10-14). The alpha and beta chains form an alternating ring which encloses part of the gamma chain. F(1) is attached to F(0) by a central stalk formed by the gamma and epsilon chains, while a peripheral stalk is formed by the delta and b chains.

The protein resides in the cell inner membrane. Functionally, f(1)F(0) ATP synthase produces ATP from ADP in the presence of a proton or sodium gradient. F-type ATPases consist of two structural domains, F(1) containing the extramembraneous catalytic core and F(0) containing the membrane proton channel, linked together by a central stalk and a peripheral stalk. During catalysis, ATP synthesis in the catalytic domain of F(1) is coupled via a rotary mechanism of the central stalk subunits to proton translocation. Its function is as follows. Component of the F(0) channel, it forms part of the peripheral stalk, linking F(1) to F(0). This is ATP synthase subunit b from Erythrobacter litoralis (strain HTCC2594).